We begin with the raw amino-acid sequence, 175 residues long: Large ribosomal subunit protein bL17m (175 aa).

The transit peptide at 1-8 (MRLSVAAA) directs the protein to the mitochondrion. Positions 155 to 175 (DLRQSQEASNHSSHTAQTPGI) are disordered. The segment covering 161–175 (EASNHSSHTAQTPGI) has biased composition (polar residues).

It belongs to the bacterial ribosomal protein bL17 family. As to quaternary structure, component of the mitochondrial large ribosomal subunit (mt-LSU). Mature mammalian 55S mitochondrial ribosomes consist of a small (28S) and a large (39S) subunit. The 28S small subunit contains a 12S ribosomal RNA (12S mt-rRNA) and 30 different proteins. The 39S large subunit contains a 16S rRNA (16S mt-rRNA), a copy of mitochondrial valine transfer RNA (mt-tRNA(Val)), which plays an integral structural role, and 52 different proteins. Detected in adrenal gland, mammary gland and adipose tissue.

It localises to the mitochondrion. The protein is Large ribosomal subunit protein bL17m (MRPL17) of Homo sapiens (Human).